Reading from the N-terminus, the 72-residue chain is Mitotic-spindle organizing protein 1 (72 aa).

The protein belongs to the MOZART1 family. Part of the gamma-tubulin complex.

It is found in the cytoplasm. The protein localises to the cytoskeleton. Its subcellular location is the microtubule organizing center. It localises to the centrosome. The protein resides in the spindle. Its function is as follows. Required for gamma-tubulin complex recruitment to the centrosome. The protein is Mitotic-spindle organizing protein 1 (mzt1) of Xenopus tropicalis (Western clawed frog).